The chain runs to 198 residues: NAD(P)H dehydrogenase (quinone) (198 aa).

The Flavodoxin-like domain maps to 4 to 189 (VLVLYYSMYG…SIARYQGEYV (186 aa)). Residues 10-15 (SMYGHI) and 78-80 (TRF) each bind FMN. Tyr-12 is a binding site for NAD(+). Trp-98 lines the substrate pocket. FMN-binding positions include 113–118 (STGTGG) and His-133.

It belongs to the WrbA family. It depends on FMN as a cofactor.

It catalyses the reaction a quinone + NADH + H(+) = a quinol + NAD(+). The enzyme catalyses a quinone + NADPH + H(+) = a quinol + NADP(+). The protein is NAD(P)H dehydrogenase (quinone) of Escherichia fergusonii (strain ATCC 35469 / DSM 13698 / CCUG 18766 / IAM 14443 / JCM 21226 / LMG 7866 / NBRC 102419 / NCTC 12128 / CDC 0568-73).